Consider the following 907-residue polypeptide: MDVQAEDLFRDVESDAFVNESHGGTGFQQNFSAWPGAFQVAWPLTNHQDLASETQDNGNKSGGDEIDVSLCDSQQQGRSRTSSLVNGLLTELYDTYRGGAGCYYFRQQDSVDSSTEASGSDAFLSRSNPESGFLQELSERQSSRHQMLYLKQKDCSELKAIKDELNRRIAIQSAKLLRQVKQKDRLQHKVQKNCDIVTACLQAVSQKRRVDTKLKFTLEPSLGQNGFQQWYDALKAVARLPTGIPKEWRKRVWLTLADHYLHSISIDWDKTMRFTFNDRSNPDDDSMGIQIVKDLHRTGCSSYCGQEAEQDRVVLKRVLLAYARWNKTIGYCQGFNILAALILEVMEGNEGDALKVMIYLIDKVLPDSYFANNLRALSVDMAVFRDLVRMKLPELSQHLDVLQRTANKESGGGYEPPLTNVFTMQWFLTLFATCLPNHTVLKIWDSVFFEGSEILLRVSLAIWAKLGEQIECCQNSDDFYSTMGRLTQEMLEDSLIDSNELMQTVYSMAQFPFPQLAELREKYTYNITPFPAPVKSASFSGRTSKMRDSDEENEIDEDDVNANAVGCLGPFSGFLAPELQKYQKQIKDQKEEQSLKASNIAELSPGAIDSCRSEYHAVFNSMMMERMTTDINALKQQYSRIKKRQLQQINQVYIAADKGPVSCILPSQVNNSPVINHLLLGKKLKQVNRSKNALHLPASKSSLLANEETKAKQNSPWRTHIRVHRKNIARAKGELGHGDTIGLIDEQNEVPKDQPDTSKETEETAQPPCSSAGEETSLDRTVMKVDGRSPEPVYQDENANVTVVQSKLEALELSPDAETEVSLEMSQTFQESQSDSHSSSSESESFKKSPKVQVFSPFPSVKPLKKSATARNLGLYGPNSRTPSVNFPHMSKTFNKAANGTTGSKKR.

Positions 51–74 (ASETQDNGNKSGGDEIDVSLCDSQ) are disordered. Residues 243-451 (GIPKEWRKRV…KIWDSVFFEG (209 aa)) form the Rab-GAP TBC domain. The stretch at 583–645 (QKQIKDQKEE…QQYSRIKKRQ (63 aa)) forms a coiled coil. Disordered regions lie at residues 731–781 (AKGE…LDRT), 812–859 (ELSP…SPFP), and 872–907 (NLGL…SKKR). Over residues 749-762 (EVPKDQPDTSKETE) the composition is skewed to basic and acidic residues. Residues 831–843 (ESQSDSHSSSSES) show a composition bias toward low complexity. Residues 892–907 (KTFNKAANGTTGSKKR) are compositionally biased toward polar residues.

In terms of biological role, may act as a GTPase-activating protein for Rab family protein(s). The chain is TBC1 domain family member 30 (tbc1d30) from Xenopus tropicalis (Western clawed frog).